Reading from the N-terminus, the 359-residue chain is Peptide chain release factor 1 (359 aa).

Gln-236 carries the post-translational modification N5-methylglutamine.

This sequence belongs to the prokaryotic/mitochondrial release factor family. In terms of processing, methylated by PrmC. Methylation increases the termination efficiency of RF1.

It localises to the cytoplasm. Peptide chain release factor 1 directs the termination of translation in response to the peptide chain termination codons UAG and UAA. This Streptococcus pyogenes serotype M3 (strain ATCC BAA-595 / MGAS315) protein is Peptide chain release factor 1.